The following is a 274-amino-acid chain: Hydroxyethylthiazole kinase (274 aa).

M54 provides a ligand contact to substrate. ATP contacts are provided by R129 and T175. A substrate-binding site is contributed by G202.

Belongs to the Thz kinase family. It depends on Mg(2+) as a cofactor.

The enzyme catalyses 5-(2-hydroxyethyl)-4-methylthiazole + ATP = 4-methyl-5-(2-phosphooxyethyl)-thiazole + ADP + H(+). It functions in the pathway cofactor biosynthesis; thiamine diphosphate biosynthesis; 4-methyl-5-(2-phosphoethyl)-thiazole from 5-(2-hydroxyethyl)-4-methylthiazole: step 1/1. Its function is as follows. Catalyzes the phosphorylation of the hydroxyl group of 4-methyl-5-beta-hydroxyethylthiazole (THZ). The chain is Hydroxyethylthiazole kinase from Granulibacter bethesdensis (strain ATCC BAA-1260 / CGDNIH1).